We begin with the raw amino-acid sequence, 178 residues long: ATP-dependent protease subunit HslV (178 aa).

The active site involves T2. Na(+)-binding residues include G157, C160, and T163.

The protein belongs to the peptidase T1B family. HslV subfamily. A double ring-shaped homohexamer of HslV is capped on each side by a ring-shaped HslU homohexamer. The assembly of the HslU/HslV complex is dependent on binding of ATP.

The protein localises to the cytoplasm. It carries out the reaction ATP-dependent cleavage of peptide bonds with broad specificity.. With respect to regulation, allosterically activated by HslU binding. Functionally, protease subunit of a proteasome-like degradation complex believed to be a general protein degrading machinery. In Hamiltonella defensa subsp. Acyrthosiphon pisum (strain 5AT), this protein is ATP-dependent protease subunit HslV.